The following is a 954-amino-acid chain: Valine--tRNA ligase (954 aa).

The 'HIGH' region motif lies at 48–58 (PNVTGSLHMGH). The 'KMSKS' region motif lies at 560-564 (KMSKS). Lysine 563 lines the ATP pocket. A coiled-coil region spans residues 883 to 953 (AGFINKEAEL…IQEQYKAIEA (71 aa)).

The protein belongs to the class-I aminoacyl-tRNA synthetase family. ValS type 1 subfamily. In terms of assembly, monomer.

It is found in the cytoplasm. The catalysed reaction is tRNA(Val) + L-valine + ATP = L-valyl-tRNA(Val) + AMP + diphosphate. Its function is as follows. Catalyzes the attachment of valine to tRNA(Val). As ValRS can inadvertently accommodate and process structurally similar amino acids such as threonine, to avoid such errors, it has a 'posttransfer' editing activity that hydrolyzes mischarged Thr-tRNA(Val) in a tRNA-dependent manner. This chain is Valine--tRNA ligase, found in Haemophilus influenzae (strain 86-028NP).